The sequence spans 343 residues: Ribosomal RNA small subunit methyltransferase C (343 aa).

The protein belongs to the methyltransferase superfamily. RsmC family. As to quaternary structure, monomer.

Its subcellular location is the cytoplasm. The enzyme catalyses guanosine(1207) in 16S rRNA + S-adenosyl-L-methionine = N(2)-methylguanosine(1207) in 16S rRNA + S-adenosyl-L-homocysteine + H(+). Functionally, specifically methylates the guanine in position 1207 of 16S rRNA in the 30S particle. In Escherichia coli O81 (strain ED1a), this protein is Ribosomal RNA small subunit methyltransferase C.